The following is a 61-amino-acid chain: MTMNKPKTNYAGYACCVICGLIVGIIFTATLLKAVERKLIHTPLIDKTIKDAYIREDCPTD.

Residues 1–11 (MTMNKPKTNYA) lie on the Cytoplasmic side of the membrane. The chain crosses the membrane as a helical; Signal-anchor for type II membrane protein span at residues 12 to 32 (GYACCVICGLIVGIIFTATLL). Residues 33 to 61 (KAVERKLIHTPLIDKTIKDAYIREDCPTD) lie on the Extracellular side of the membrane.

It belongs to the poxviridae A40 protein family.

The protein resides in the host membrane. This Homo sapiens (Human) protein is Protein A40 homolog (A45R).